A 270-amino-acid polypeptide reads, in one-letter code: tRNA pseudouridine synthase A (270 aa).

Catalysis depends on Asp-51, which acts as the Nucleophile. Residue Tyr-109 coordinates substrate.

The protein belongs to the tRNA pseudouridine synthase TruA family. As to quaternary structure, homodimer.

The enzyme catalyses uridine(38/39/40) in tRNA = pseudouridine(38/39/40) in tRNA. Formation of pseudouridine at positions 38, 39 and 40 in the anticodon stem and loop of transfer RNAs. This is tRNA pseudouridine synthase A from Burkholderia thailandensis (strain ATCC 700388 / DSM 13276 / CCUG 48851 / CIP 106301 / E264).